The primary structure comprises 242 residues: UDP-2,3-diacylglucosamine hydrolase (242 aa).

Mn(2+)-binding residues include Asp9, His11, Asp42, Asn79, and His114. Position 79–80 (79–80 (NR)) interacts with substrate. Residues Asp122, Ser160, Asn164, Lys167, and His195 each contribute to the substrate site. Mn(2+) contacts are provided by His195 and His197.

The protein belongs to the LpxH family. Mn(2+) is required as a cofactor.

The protein localises to the cell inner membrane. It catalyses the reaction UDP-2-N,3-O-bis[(3R)-3-hydroxytetradecanoyl]-alpha-D-glucosamine + H2O = 2-N,3-O-bis[(3R)-3-hydroxytetradecanoyl]-alpha-D-glucosaminyl 1-phosphate + UMP + 2 H(+). The protein operates within glycolipid biosynthesis; lipid IV(A) biosynthesis; lipid IV(A) from (3R)-3-hydroxytetradecanoyl-[acyl-carrier-protein] and UDP-N-acetyl-alpha-D-glucosamine: step 4/6. Functionally, hydrolyzes the pyrophosphate bond of UDP-2,3-diacylglucosamine to yield 2,3-diacylglucosamine 1-phosphate (lipid X) and UMP by catalyzing the attack of water at the alpha-P atom. Involved in the biosynthesis of lipid A, a phosphorylated glycolipid that anchors the lipopolysaccharide to the outer membrane of the cell. The protein is UDP-2,3-diacylglucosamine hydrolase of Shewanella loihica (strain ATCC BAA-1088 / PV-4).